Consider the following 222-residue polypeptide: MLSRAVCGTGRQLAPALGYLGSRQKHSLPDLPYDYGALEPHINAQIMQLHHSKHHAAYVNNLNVTEEKYQEALAKGDVTAQIALQPALKFNGGGHINHSIFWTNLSPNGGGEPKGELLEAIKRDFGSFEKYKEKLTAASVGVQGSGWGWLGFNKERGQLQIAACLNQDPLQGTTGLIPLLGIDVWEHAYYLQYKNVRPDYLKAIWNVINWENVTERYMACKK.

The N-terminal 24 residues, 1–24 (MLSRAVCGTGRQLAPALGYLGSRQ), are a transit peptide targeting the mitochondrion. H50 is a binding site for Mn(2+). Y58 carries the 3'-nitrotyrosine modification. Residues K68 and K75 each carry the N6-acetyllysine; alternate modification. 2 positions are modified to N6-succinyllysine; alternate: K68 and K75. Residue H98 coordinates Mn(2+). The residue at position 114 (K114) is an N6-acetyllysine. N6-acetyllysine; alternate is present on residues K122 and K130. An N6-succinyllysine; alternate mark is found at K122 and K130. D183 and H187 together coordinate Mn(2+). At K202 the chain carries N6-acetyllysine.

It belongs to the iron/manganese superoxide dismutase family. Homotetramer. It depends on Mn(2+) as a cofactor. Post-translationally, nitrated under oxidative stress. Nitration coupled with oxidation inhibits the catalytic activity. In terms of processing, acetylation at Lys-122 decreases enzymatic activity. Deacetylated by SIRT3 upon exposure to ionizing radiations or after long fasting. Polyubiquitinated; leading to proteasomal degradation. Deubiquitinated by USP36 which increases protein stability.

It is found in the mitochondrion matrix. It catalyses the reaction 2 superoxide + 2 H(+) = H2O2 + O2. Functionally, destroys superoxide anion radicals which are normally produced within the cells and which are toxic to biological systems. This chain is Superoxide dismutase [Mn], mitochondrial (SOD2), found in Macaca nemestrina (Pig-tailed macaque).